Reading from the N-terminus, the 200-residue chain is Small ribosomal subunit protein eS8A (200 aa).

Disordered regions lie at residues 1–40 (MGITRDSRHKRSATGAKRAQYRKKRKFELGRQPSNTRIGP) and 123–145 (SKGKKATSTPNPKSKHVQRKHSA). Positions 135–145 (KSKHVQRKHSA) are enriched in basic residues.

It belongs to the eukaryotic ribosomal protein eS8 family. In terms of assembly, component of the small ribosomal subunit (SSU). Mature yeast ribosomes consist of a small (40S) and a large (60S) subunit. The 40S small subunit contains 1 molecule of ribosomal RNA (18S rRNA) and at least 33 different proteins. The large 60S subunit contains 3 rRNA molecules (25S, 5.8S and 5S rRNA) and at least 46 different proteins.

It localises to the cytoplasm. Functionally, component of the ribosome, a large ribonucleoprotein complex responsible for the synthesis of proteins in the cell. The small ribosomal subunit (SSU) binds messenger RNAs (mRNAs) and translates the encoded message by selecting cognate aminoacyl-transfer RNA (tRNA) molecules. The large subunit (LSU) contains the ribosomal catalytic site termed the peptidyl transferase center (PTC), which catalyzes the formation of peptide bonds, thereby polymerizing the amino acids delivered by tRNAs into a polypeptide chain. The nascent polypeptides leave the ribosome through a tunnel in the LSU and interact with protein factors that function in enzymatic processing, targeting, and the membrane insertion of nascent chains at the exit of the ribosomal tunnel. The protein is Small ribosomal subunit protein eS8A (rps801) of Schizosaccharomyces pombe (strain 972 / ATCC 24843) (Fission yeast).